The following is a 1513-amino-acid chain: Lid2 complex component lid2 (1513 aa).

Residues 56–97 (GLSVQLNASNMTDPFKFLLDNWHTIFKNGAIKLLPPEGWQIP) form the JmjN domain. One can recognise an ARID domain in the interval 121–212 (YEKNYDYFKK…YIKPFERDSS (92 aa)). The tract at residues 211 to 253 (SSPSFKSKRSESSTRKIRNTRSSAQQESPIPETSAQSPVQTIQ) is disordered. Polar residues predominate over residues 230–253 (TRSSAQQESPIPETSAQSPVQTIQ). The PHD-type 1 zinc-finger motif lies at 268–318 (GEQCEYCGLDKNPETILLCDGCEAAYHTSCLDPPLTSIPKEDWYCDACKFN). In terms of domain architecture, JmjC spans 408–574 (KYSSEPWNLH…DGLLNSSISV (167 aa)). The residue at position 722 (serine 722) is a Phosphoserine. Residues 1063 to 1086 (LSLNDRPGPPMEPASRETSPDSEG) are disordered. A compositionally biased stretch (basic and acidic residues) spans 1076–1086 (ASRETSPDSEG). The segment at 1093 to 1145 (KKGCIFCFCRLPESGVMIECEICHEWYHAKCLKMSKKKLRQDEKFTCPICDYR) adopts a PHD-type 2 zinc-finger fold. The RING-type 1; degenerate zinc-finger motif lies at 1096 to 1143 (CIFCFCRLPESGVMIECEICHEWYHAKCLKMSKKKLRQDEKFTCPICD). 2 disordered regions span residues 1244 to 1268 (APNPPPIIGESKSTRKPRPTKRQRQ) and 1280 to 1327 (ASAI…NNKN). Residues 1257-1268 (TRKPRPTKRQRQ) show a composition bias toward basic residues. Residues 1301–1313 (VEAETKSKSEKSP) show a composition bias toward basic and acidic residues. Positions 1316–1326 (NGTNISDANNK) are enriched in polar residues. Residues 1352–1403 (NSSCLCGEEFSPRDSFIDCTICERRFHYDCVGLNNEIADSVSKFTCPICMEQ) form a PHD-type 3 zinc finger. An RING-type 2; degenerate zinc finger spans residues 1354-1401 (SCLCGEEFSPRDSFIDCTICERRFHYDCVGLNNEIADSVSKFTCPICM).

In terms of assembly, component of the Lid2 complex composed of ash2, jmj3, lid2, sdc1 and snt2.

It localises to the nucleus. This is Lid2 complex component lid2 (lid2) from Schizosaccharomyces pombe (strain 972 / ATCC 24843) (Fission yeast).